Reading from the N-terminus, the 118-residue chain is Immunoglobulin heavy variable 4-30-2 (118 aa).

The signal sequence occupies residues 1-19 (MKHLWFFLLLVAAPRWVLS). The tract at residues 20–44 (QLQLQESGSGLVKPSQTLSLTCAVS) is framework-1. In terms of domain architecture, Ig-like spans 20–118 (QLQLQESGSG…ADTAVYYCAR (99 aa)). Residues C41 and C116 are joined by a disulfide bond. Residues 45–54 (GGSISSGGYS) are complementarity-determining-1. The interval 55–71 (WSWIRQPPGKGLEWIGY) is framework-2. A complementarity-determining-2 region spans residues 72-78 (IYHSGST). Residues 79–116 (YYNPSLKSRVTISVDRSKNQFSLKLSSVTAADTAVYYC) are framework-3. The segment at 117 to 118 (AR) is complementarity-determining-3.

In terms of assembly, immunoglobulins are composed of two identical heavy chains and two identical light chains; disulfide-linked.

The protein resides in the secreted. Its subcellular location is the cell membrane. In terms of biological role, v region of the variable domain of immunoglobulin heavy chains that participates in the antigen recognition. Immunoglobulins, also known as antibodies, are membrane-bound or secreted glycoproteins produced by B lymphocytes. In the recognition phase of humoral immunity, the membrane-bound immunoglobulins serve as receptors which, upon binding of a specific antigen, trigger the clonal expansion and differentiation of B lymphocytes into immunoglobulins-secreting plasma cells. Secreted immunoglobulins mediate the effector phase of humoral immunity, which results in the elimination of bound antigens. The antigen binding site is formed by the variable domain of one heavy chain, together with that of its associated light chain. Thus, each immunoglobulin has two antigen binding sites with remarkable affinity for a particular antigen. The variable domains are assembled by a process called V-(D)-J rearrangement and can then be subjected to somatic hypermutations which, after exposure to antigen and selection, allow affinity maturation for a particular antigen. The protein is Immunoglobulin heavy variable 4-30-2 of Homo sapiens (Human).